The sequence spans 339 residues: MNQSNASMTVIGAGSYGTALAITLARNGHQVVLWGHDPKHIATLEHDRCNVAFLPDVPFPDTLHLESDLATALAASRNILVVVPSHVFSDVLRQIKPLMRPDARLVWATKGLEAETGRLLQDVAREALGDQIPLAVISGPTFAKELAAGLPTAISLASTDETFADDLQQLLHCGKSFRVYINADFIGVQLGGAVKNVIAIGAGMSDGIGFGANARTALITRGLTEMSRLGAALGADPATFMGMAGLGDLVLTCTDNQSRNRRFGMMLGQGMDVKGAQDKIGQVVEGYRNTKEVRELAHRFGVEMPITEEIYQVLYCGKNAREAALTLLGRARKEELSRH.

Residues S15, Y16, H36, and K110 each contribute to the NADPH site. Sn-glycerol 3-phosphate contacts are provided by K110, G139, and T141. A143 provides a ligand contact to NADPH. Residues K195, D248, S258, R259, and N260 each coordinate sn-glycerol 3-phosphate. The active-site Proton acceptor is K195. R259 serves as a coordination point for NADPH. 2 residues coordinate NADPH: V283 and E285.

This sequence belongs to the NAD-dependent glycerol-3-phosphate dehydrogenase family.

It localises to the cytoplasm. It carries out the reaction sn-glycerol 3-phosphate + NAD(+) = dihydroxyacetone phosphate + NADH + H(+). The enzyme catalyses sn-glycerol 3-phosphate + NADP(+) = dihydroxyacetone phosphate + NADPH + H(+). It participates in membrane lipid metabolism; glycerophospholipid metabolism. Its function is as follows. Catalyzes the reduction of the glycolytic intermediate dihydroxyacetone phosphate (DHAP) to sn-glycerol 3-phosphate (G3P), the key precursor for phospholipid synthesis. This chain is Glycerol-3-phosphate dehydrogenase [NAD(P)+], found in Salmonella agona (strain SL483).